Consider the following 937-residue polypeptide: AP-2 complex subunit beta (937 aa).

Threonine 2 bears the N-acetylthreonine mark. Residue serine 4 is modified to Phosphoserine. The residue at position 265 (lysine 265) is an N6-acetyllysine. Residue tyrosine 737 is modified to Phosphotyrosine; by SRC. An interaction with ARRB1 region spans residues 841 to 937 (WKDIPNENEL…YQVYDSILKN (97 aa)). Tyrosine 928 is modified (phosphotyrosine).

This sequence belongs to the adaptor complexes large subunit family. As to quaternary structure, adaptor protein complex 2 (AP-2) is a heterotetramer composed of two large adaptins (alpha-type subunit AP2A1 or AP2A2 and beta-type subunit AP2B1), a medium adaptin (mu-type subunit AP2M1) and a small adaptin (sigma-type subunit AP2S1). Interacts with EPN1. Interacts with EPS15; clathrin competes with EPS15. Interacts with SNAP91; clathrin competes with SNAP91. Interacts with CLTC; clathrin competes with EPS15, SNAP91 and PIP5K1C. Interacts with LDLRAP1. Interacts with AMPH and BIN1. Interacts with ARF6 (GDP-bound). Interacts (dephosphorylated at Tyr-737) with ARRB1; phosphorylation of AP2B1 at Tyr-737 disrupts the interaction. Interacts with SLC2A8. Interacts with SCYL1 and SCYL2. Interacts with TGFBR1 and TGFBR2. Interacts with PIP5K1C; clathrin competes with PIP5K1C. Interacts with DENND1B, but not with DENND1A, nor DENND1C. Interacts with FCHO1. Interacts with RFTN1. Interacts with KIAA1107. Together with AP2A1 or AP2A2 and AP2M1, it interacts with ADAM10; this interaction facilitates ADAM10 endocytosis from the plasma membrane during long-term potentiation in hippocampal neurons. Phosphorylation at Tyr-737 by SRC occurs at the plasma membrane in clathrin-coated vesicles (CCVs). As to expression, expressed in the brain (at protein level).

Its subcellular location is the cell membrane. The protein resides in the membrane. The protein localises to the coated pit. Its function is as follows. Component of the adaptor protein complex 2 (AP-2). Adaptor protein complexes function in protein transport via transport vesicles in different membrane traffic pathways. Adaptor protein complexes are vesicle coat components and appear to be involved in cargo selection and vesicle formation. AP-2 is involved in clathrin-dependent endocytosis in which cargo proteins are incorporated into vesicles surrounded by clathrin (clathrin-coated vesicles, CCVs) which are destined for fusion with the early endosome. The clathrin lattice serves as a mechanical scaffold but is itself unable to bind directly to membrane components. Clathrin-associated adaptor protein (AP) complexes which can bind directly to both the clathrin lattice and to the lipid and protein components of membranes are considered to be the major clathrin adaptors contributing the CCV formation. AP-2 also serves as a cargo receptor to selectively sort the membrane proteins involved in receptor-mediated endocytosis. AP-2 seems to play a role in the recycling of synaptic vesicle membranes from the presynaptic surface. AP-2 recognizes Y-X-X-[FILMV] (Y-X-X-Phi) and [ED]-X-X-X-L-[LI] endocytosis signal motifs within the cytosolic tails of transmembrane cargo molecules. AP-2 may also play a role in maintaining normal post-endocytic trafficking through the ARF6-regulated, non-clathrin pathway. During long-term potentiation in hippocampal neurons, AP-2 is responsible for the endocytosis of ADAM10. The AP-2 beta subunit acts via its C-terminal appendage domain as a scaffolding platform for endocytic accessory proteins; at least some clathrin-associated sorting proteins (CLASPs) are recognized by their [DE]-X(1,2)-F-X-X-[FL]-X-X-X-R motif. The AP-2 beta subunit binds to clathrin heavy chain, promoting clathrin lattice assembly; clathrin displaces at least some CLASPs from AP2B1 which probably then can be positioned for further coat assembly. In Homo sapiens (Human), this protein is AP-2 complex subunit beta (AP2B1).